The following is a 193-amino-acid chain: Xanthine phosphoribosyltransferase (193 aa).

Leu-20 and Asn-27 together coordinate xanthine. Position 128 to 132 (128 to 132) interacts with 5-phospho-alpha-D-ribose 1-diphosphate; that stretch reads ASGGT. Lys-156 contributes to the xanthine binding site.

It belongs to the purine/pyrimidine phosphoribosyltransferase family. Xpt subfamily. As to quaternary structure, homodimer.

The protein localises to the cytoplasm. The catalysed reaction is XMP + diphosphate = xanthine + 5-phospho-alpha-D-ribose 1-diphosphate. The protein operates within purine metabolism; XMP biosynthesis via salvage pathway; XMP from xanthine: step 1/1. In terms of biological role, converts the preformed base xanthine, a product of nucleic acid breakdown, to xanthosine 5'-monophosphate (XMP), so it can be reused for RNA or DNA synthesis. The polypeptide is Xanthine phosphoribosyltransferase (Deinococcus deserti (strain DSM 17065 / CIP 109153 / LMG 22923 / VCD115)).